A 67-amino-acid chain; its full sequence is Alpha-conotoxin-like Qc1.1b (67 aa).

Residues 1-21 (MGMRMMFTMFLLVVLAITVVS) form the signal peptide. Residues 22–46 (FTSDHASDGRNTAANDKASKLMALR) constitute a propeptide that is removed on maturation. Cystine bridges form between cysteine 49–cysteine 55 and cysteine 50–cysteine 63. The interval 51-53 (DNP) is lacks the Ser-Xaa-Pro motif that is crucial for potent interaction with nAChR.

The protein belongs to the conotoxin A superfamily. As to expression, expressed by the venom duct.

The protein localises to the secreted. Its function is as follows. Alpha-conotoxins act on postsynaptic membranes, they bind to the nicotinic acetylcholine receptors (nAChR) and thus inhibit them. Has possibly a distinct nAChR binding mode from other alpha-conotoxins, due to a different three residue motif (lacks the Ser-Xaa-Pro motif). The polypeptide is Alpha-conotoxin-like Qc1.1b (Conus quercinus (Oak cone)).